The chain runs to 197 residues: UPF0301 protein BAV3012 (197 aa).

Belongs to the UPF0301 (AlgH) family.

This Bordetella avium (strain 197N) protein is UPF0301 protein BAV3012.